A 1368-amino-acid chain; its full sequence is Cingulin (1368 aa).

The interval 9 to 378 (MADQHIPVGQ…KQQRTVQSEF (370 aa)) is interaction with TJP3/ZO3 and myosin. A head region spans residues 9–435 (MADQHIPVGQ…EKLPSLQVQP (427 aa)). The ZIM signature appears at 41-55 (QDSYGVAVRVQGIDG). Disordered stretches follow at residues 71 to 264 (FGVQ…TKPL), 278 to 312 (GQVR…DTAD), 1053 to 1080 (SRKE…NSSR), 1163 to 1183 (NRSR…RSRG), and 1308 to 1368 (QQEI…TSSC). Polar residues predominate over residues 83-97 (NASNTSPPNYQNYSS). The interaction with F-actin stretch occupies residues 101 to 294 (GPSRSISSES…ARRSQALKDE (194 aa)). 2 stretches are compositionally biased toward low complexity: residues 116–132 (PYGS…YSSA) and 200–211 (SQSSRDSAWSRS). The tract at residues 150–295 (SSLPRPLQAS…RRSQALKDER (146 aa)) is interaction with TJP2/ZO2. A compositionally biased stretch (polar residues) spans 228–256 (SATSQQSTSVSNKTKKNGLSTSSPSNQSN). The span at 290-312 (ALKDERKRSQSLDGRKNYHDTAD) shows a compositional bias: basic and acidic residues. The interval 377–1368 (EFQLKSTPDL…TESNLQTSSC (992 aa)) is interaction with myosin. Positions 436–1330 (GEDTISLGSQ…VMEKESKRKP (895 aa)) form a coiled coil. The span at 1320 to 1338 (KVMEKESKRKPIRPAHDDD) shows a compositional bias: basic and acidic residues. The segment at 1331-1368 (IRPAHDDDLSSDGEFGGPYDPSSITSLLTESNLQTSSC) is tail. Residues 1352 to 1368 (SSITSLLTESNLQTSSC) are compositionally biased toward polar residues.

Belongs to the cingulin family. In terms of assembly, parallel homodimer. Interacts with TJP1/ZO1 and TJP2/ZO2 in vivo, and TJP3/ZO3, myosin and OCLN in vitro, possibly directly. Acts as an F-actin bundling protein in vitro. Localized on the cytoplasmic face of tight junctions of polarized epithelia and some endothelia.

Its subcellular location is the cell junction. It is found in the tight junction. In terms of biological role, probably plays a role in the formation and regulation of the tight junction (TJ) paracellular permeability barrier, possibly by linking ZO proteins to the actomyosin cytoskeleton. The sequence is that of Cingulin from Xenopus laevis (African clawed frog).